The following is a 156-amino-acid chain: MLTHLDSLGRASMVDVTDKAVTAREAVAEARVRMLPQTLQLIQQGGHPKGDVFAVARIAGIQAAKKTHELIPLCHPLLLTSIKVELQADGEDSVLIRAVCKLAGQTGVEMEALTAASVAALTIYDMCKAVDRGMVIEGVRLLEKLGGKSGHWQVQA.

Residues 73–75 (LCH) and 110–111 (ME) contribute to the substrate site. Aspartate 125 is a catalytic residue.

Belongs to the MoaC family. As to quaternary structure, homohexamer; trimer of dimers.

The enzyme catalyses (8S)-3',8-cyclo-7,8-dihydroguanosine 5'-triphosphate = cyclic pyranopterin phosphate + diphosphate. It participates in cofactor biosynthesis; molybdopterin biosynthesis. Functionally, catalyzes the conversion of (8S)-3',8-cyclo-7,8-dihydroguanosine 5'-triphosphate to cyclic pyranopterin monophosphate (cPMP). This is Cyclic pyranopterin monophosphate synthase from Stutzerimonas stutzeri (strain A1501) (Pseudomonas stutzeri).